The primary structure comprises 249 residues: Putative TrmH family tRNA/rRNA methyltransferase (249 aa).

The S-adenosyl-L-methionine site is built by Gly-196, Ile-216, and Leu-225.

This sequence belongs to the class IV-like SAM-binding methyltransferase superfamily. RNA methyltransferase TrmH family.

This chain is Putative TrmH family tRNA/rRNA methyltransferase, found in Staphylococcus epidermidis (strain ATCC 35984 / DSM 28319 / BCRC 17069 / CCUG 31568 / BM 3577 / RP62A).